A 756-amino-acid chain; its full sequence is Cilium assembly protein DZIP1L (756 aa).

The disordered stretch occupies residues 1–20; it reads MLGQFSPGEPYTTSLSSTPP. Low complexity predominate over residues 10–19; that stretch reads PYTTSLSSTP. Positions 108–158 form a coiled coil; it reads DFLSSQLAGLEERLQAATSLVQQGEGQRAELEKSLQETKQENRRRKQLIAT. The C2H2-type zinc finger occupies 171–194; it reads HKCQFCEKSFVNYSYLQAHVQRRH. Composition is skewed to basic and acidic residues over residues 193-202, 237-262, 319-335, and 344-365; these read RHPEVTDAEK, NLRR…ERWK, DPEK…LRER, and RRKF…KSEN. Disordered stretches follow at residues 193–212, 233–262, 310–365, 409–466, 531–626, and 693–756; these read RHPE…EEME, QQAD…ERWK, NNAS…KSEN, KIKK…MRES, VKSL…AYIT, and IKTP…GTSA. Coiled-coil stretches lie at residues 196–283 and 321–416; these read EVTD…FLQE and EKEM…LSAT. Polar residues predominate over residues 534–558; the sequence is LQKSSGKPTPNTLKQRGKKTSTPLN. Residues 560 to 578 are compositionally biased toward basic and acidic residues; that stretch reads KSLRFRQDSKASDRREKSQ. Over residues 586 to 598 the composition is skewed to pro residues; the sequence is TPTPRSKAPPPNQ.

Belongs to the DZIP C2H2-type zinc-finger protein family.

It is found in the cytoplasm. It localises to the cytoskeleton. Its subcellular location is the cilium basal body. The protein resides in the microtubule organizing center. The protein localises to the centrosome. It is found in the centriole. In terms of biological role, involved in primary cilium formation. Probably acts as a transition zone protein required for localization of PKD1/PC1 and PKD2/PC2 to the ciliary membrane. This chain is Cilium assembly protein DZIP1L (dzip1l), found in Danio rerio (Zebrafish).